Reading from the N-terminus, the 802-residue chain is MVSVNGVPAARLPVTLPGEDRASRKAPDYLMVEQPPFDELMYTIGETIELSCAAEDASTTTKWCKDGIGIVPNNRTSTRQGLLKIINVSSDDSGIYSCRLWHSTEILRNFTIRVTDLPSSGDDEDDDDDDDDETEDREPPRWTQPERMEKKLIAVPAANTIRFRCPAAGNPTPTIHWLKNGKEFRGEHRIGGIKLRHQQWSLVMESVVPSDKGNYTCVVENKYGSIRQTYQLDVLERSSHRPILQAGLPGNQTVVLGSDVEFHCKVYSDAQPHIQWLKHVEVNGSKYGPDGDPYVSVLQSFINGTEVDSTLSLKNVTETNEGQYVCRANNFIGVAEASFWLHIYKPAPAEPVEKALTTSSSSITVLIVVTSTIVFILLVIIVITHLMKVPSKKSMTAPPVHKVSKFPLKRQQVSLESNSSMNSNTPLVRITHLSSSDGTMLANVSELGLPLDPKWELLRSRLTLGKPLGEGCFGQVVMAEAIGIDKERPNKPATVAVKMLKDDATDKDLSDLVSEMEMMKMIGKHKNIINLLGACTQDGPLYVLVEYASKGSLREYLKARRPPGMDYSFDACKIPAEQLTFKDLVSCAYQVARGMEYLASQKCIHRDLAARNVLVTDDNVMKIADFGLARDIHNIDYYKKTTNGRLPVKWMAPEALFDRIYTHHSDVWSYGVLLWEIFTLGGSPYPGIPVEELFKLLKEGHRMDKPANCTHELYMIMRECWHAVPSQRPAFKQLVEDLDRVLTVTSTNEYLDLSVAFEQYSPPSQDSHSTCSSGDDSVFAHDILPDEPCLPKHQQHNGAIPT.

Residues 27 to 115 (PDYLMVEQPP…ILRNFTIRVT (89 aa)) form the Ig-like C2-type 1 domain. Cysteine 52 and cysteine 98 are joined by a disulfide. 3 N-linked (GlcNAc...) asparagine glycosylation sites follow: asparagine 74, asparagine 87, and asparagine 109. Positions 116 to 148 (DLPSSGDDEDDDDDDDDETEDREPPRWTQPERM) are disordered. Residues 121-136 (GDDEDDDDDDDDETED) are compositionally biased toward acidic residues. The span at 137 to 148 (REPPRWTQPERM) shows a compositional bias: basic and acidic residues. 2 consecutive Ig-like C2-type domains span residues 140 to 233 (PRWT…YQLD) and 242 to 342 (PILQ…FWLH). A disulfide bridge connects residues cysteine 165 and cysteine 217. 5 N-linked (GlcNAc...) asparagine glycosylation sites follow: asparagine 214, asparagine 251, asparagine 283, asparagine 303, and asparagine 315. The cysteines at positions 264 and 326 are disulfide-linked. The chain crosses the membrane as a helical span at residues 363-383 (ITVLIVVTSTIVFILLVIIVI). The Cytoplasmic segment spans residues 384–802 (THLMKVPSKK…HQQHNGAIPT (419 aa)). In terms of domain architecture, Protein kinase spans 462 to 751 (LTLGKPLGEG…LTVTSTNEYL (290 aa)). ATP-binding positions include 468–476 (LGEGCFGQV) and lysine 498. Aspartate 607 functions as the Proton acceptor in the catalytic mechanism. Residues tyrosine 637, tyrosine 638, tyrosine 714, and tyrosine 750 each carry the phosphotyrosine; by autocatalysis modification.

This sequence belongs to the protein kinase superfamily. Tyr protein kinase family. Fibroblast growth factor receptor subfamily. In terms of assembly, monomer. Homodimer after ligand binding. Post-translationally, autophosphorylated. Binding of FGF family members together with heparan sulfate proteoglycan or heparin promotes receptor dimerization and autophosphorylation on tyrosine residues. Autophosphorylation occurs in trans between the two FGFR molecules present in the dimer.

Its subcellular location is the cell membrane. It carries out the reaction L-tyrosyl-[protein] + ATP = O-phospho-L-tyrosyl-[protein] + ADP + H(+). Present in an inactive conformation in the absence of bound ligand. Ligand binding leads to dimerization and activation by autophosphorylation on tyrosine residues. Functionally, tyrosine-protein kinase that acts as a cell-surface receptor for fibroblast growth factors and plays an essential role in the regulation of cell proliferation, differentiation and apoptosis. Plays an essential role in the regulation of chondrocyte differentiation, proliferation and apoptosis, and is required for normal skeleton development. Regulates both osteogenesis and postnatal bone mineralization by osteoblasts. Promotes apoptosis in chondrocytes, but can also promote cancer cell proliferation. Phosphorylates PLCG1, CBL and FRS2. Ligand binding leads to the activation of several signaling cascades. Activation of PLCG1 leads to the production of the cellular signaling molecules diacylglycerol and inositol 1,4,5-trisphosphate. Phosphorylation of FRS2 triggers recruitment of GRB2, GAB1, PIK3R1 and SOS1, and mediates activation of RAS, MAPK1/ERK2, MAPK3/ERK1 and the MAP kinase signaling pathway, as well as of the AKT1 signaling pathway. The protein is Fibroblast growth factor receptor 3 (fgfr3) of Xenopus laevis (African clawed frog).